Consider the following 289-residue polypeptide: Ribosomal protein L11 methyltransferase (289 aa).

4 residues coordinate S-adenosyl-L-methionine: T142, G163, D185, and N226.

Belongs to the methyltransferase superfamily. PrmA family.

The protein resides in the cytoplasm. It catalyses the reaction L-lysyl-[protein] + 3 S-adenosyl-L-methionine = N(6),N(6),N(6)-trimethyl-L-lysyl-[protein] + 3 S-adenosyl-L-homocysteine + 3 H(+). Methylates ribosomal protein L11. This Legionella pneumophila (strain Lens) protein is Ribosomal protein L11 methyltransferase.